We begin with the raw amino-acid sequence, 153 residues long: Regulatory protein RecX (153 aa).

It belongs to the RecX family.

It is found in the cytoplasm. Functionally, modulates RecA activity. This Neisseria gonorrhoeae (strain ATCC 700825 / FA 1090) protein is Regulatory protein RecX.